The primary structure comprises 231 residues: Octanoyltransferase (231 aa).

The 183-residue stretch at 49–231 (SEAAEQVWLL…KRTFSEVFGS (183 aa)) folds into the BPL/LPL catalytic domain. Residues 87–94 (RGGQITYH), 162–164 (AIG), and 175–177 (GVS) contribute to the substrate site. Catalysis depends on Cys-193, which acts as the Acyl-thioester intermediate.

Belongs to the LipB family.

The protein resides in the cytoplasm. It carries out the reaction octanoyl-[ACP] + L-lysyl-[protein] = N(6)-octanoyl-L-lysyl-[protein] + holo-[ACP] + H(+). It participates in protein modification; protein lipoylation via endogenous pathway; protein N(6)-(lipoyl)lysine from octanoyl-[acyl-carrier-protein]: step 1/2. Functionally, catalyzes the transfer of endogenously produced octanoic acid from octanoyl-acyl-carrier-protein onto the lipoyl domains of lipoate-dependent enzymes. Lipoyl-ACP can also act as a substrate although octanoyl-ACP is likely to be the physiological substrate. The sequence is that of Octanoyltransferase from Nitrobacter winogradskyi (strain ATCC 25391 / DSM 10237 / CIP 104748 / NCIMB 11846 / Nb-255).